Here is a 434-residue protein sequence, read N- to C-terminus: Guanosine-inosine kinase (434 aa).

GMP contacts are provided by residues 40–45, 93–97, and R198; these read DQTLVD and GTIGN. ATP is bound by residues 284–289, G357, and N402; that span reads TAGPIG.

Belongs to the carbohydrate kinase PfkB family. Mg(2+) serves as cofactor.

It carries out the reaction guanosine + ATP = GMP + ADP + H(+). The catalysed reaction is inosine + ATP = IMP + ADP + H(+). It functions in the pathway purine metabolism; IMP biosynthesis via salvage pathway; IMP from inosine: step 1/1. Its pathway is purine metabolism; GMP biosynthesis via salvage pathway. Catalyzes the phosphorylation of guanosine and inosine to GMP and IMP, respectively. The sequence is that of Guanosine-inosine kinase from Escherichia coli O157:H7.